The following is a 168-amino-acid chain: Peptide deformylase 2 (168 aa).

The Fe cation site is built by C91 and H133. The active site involves E134. H137 contributes to the Fe cation binding site.

Belongs to the polypeptide deformylase family. The cofactor is Fe(2+).

The catalysed reaction is N-terminal N-formyl-L-methionyl-[peptide] + H2O = N-terminal L-methionyl-[peptide] + formate. Removes the formyl group from the N-terminal Met of newly synthesized proteins. Requires at least a dipeptide for an efficient rate of reaction. N-terminal L-methionine is a prerequisite for activity but the enzyme has broad specificity at other positions. The chain is Peptide deformylase 2 from Vibrio cholerae serotype O1 (strain ATCC 39315 / El Tor Inaba N16961).